We begin with the raw amino-acid sequence, 286 residues long: MVKCLLLSFLIIAIFIGVPTAKGDVNFDLSTATAKTYTKFIEDFRATLPFSHKVYDIPLLYSTISDSRRFILLDLTSYAYETISVAIDVTNVYVVAYRTRDVSYFFKESPPEAYNILFKGTRKITLPYTGNYENLQTAAHKIRENIDLGLPALSSAITTLFYYNAQSAPSALLVLIQTTAEAARFKYIERHVAKYVATNFKPNLAIISLENQWSALSKQIFLAQNQGGKFRNPVDLIKPTGERFQVTNVDSDVVKGNIKLLLNSRASTADENFITTMTLLGESVVN.

The signal sequence occupies residues 1-23 (MVKCLLLSFLIIAIFIGVPTAKG). Glutamate 181 is an active-site residue.

The protein belongs to the ribosome-inactivating protein family. Type 1 RIP subfamily.

The enzyme catalyses Endohydrolysis of the N-glycosidic bond at one specific adenosine on the 28S rRNA.. The protein is Ribosome-inactivating protein momordin II of Momordica balsamina (Bitter gourd).